The sequence spans 372 residues: Actin-related protein 2/3 complex subunit 1B (372 aa).

6 WD repeats span residues Phe-6–Val-45, Glu-50–Thr-89, Arg-94–Lys-135, Pro-140–Arg-179, Ser-242–Ser-280, and Leu-324–Lys-367.

This sequence belongs to the WD repeat ARPC1 family. As to quaternary structure, component of the Arp2/3 complex composed of ACTR2/ARP2, ACTR3/ARP3, ARPC1B/p41-ARC, ARPC2/p34-ARC, ARPC3/p21-ARC, ARPC4/p20-ARC and ARPC5/p16-ARC.

The protein localises to the cytoplasm. It is found in the cytoskeleton. Its subcellular location is the nucleus. Its function is as follows. Component of the Arp2/3 complex, a multiprotein complex that mediates actin polymerization upon stimulation by nucleation-promoting factor (NPF). The Arp2/3 complex mediates the formation of branched actin networks in the cytoplasm, providing the force for cell motility. In addition to its role in the cytoplasmic cytoskeleton, the Arp2/3 complex also promotes actin polymerization in the nucleus, thereby regulating gene transcription and repair of damaged DNA. The Arp2/3 complex promotes homologous recombination (HR) repair in response to DNA damage by promoting nuclear actin polymerization, leading to drive motility of double-strand breaks (DSBs). This Homo sapiens (Human) protein is Actin-related protein 2/3 complex subunit 1B.